The following is a 360-amino-acid chain: Protein phosphatase methylesterase 1 (360 aa).

The interval 26–50 is disordered; that stretch reads DEDDIPEPAVMPPTGNSSSTANTED. Catalysis depends on residues Ser167, Asp192, and His316.

This sequence belongs to the AB hydrolase superfamily.

It catalyses the reaction [phosphatase 2A protein]-C-terminal L-leucine methyl ester + H2O = [phosphatase 2A protein]-C-terminal L-leucine + methanol + H(+). Demethylates proteins that have been reversibly carboxymethylated. Demethylates the phosphatase PP2A catalytic subunit. Involved in the regulation of filamentous growth. This Candida albicans (strain SC5314 / ATCC MYA-2876) (Yeast) protein is Protein phosphatase methylesterase 1 (PPE1).